Reading from the N-terminus, the 529-residue chain is MPMSLGNAFIKNFLGKAPDWYKVAIISFLIINPIVFFFVDPFVAGWLLVVEFIFTLAMALKCYPLQPGGLLAIEAIAIGMTSPEQVKHELVANIEVLLLLVFMVAGIYFMKQLLLFIFTKILLGIRSKAILSLAFCFAAAFLSAFLDALTVIAVVISVAVGFYSIYHKVASGKGVSSDHDHTQDDHLAELTREDLENYRAFLRSLLMHAGVGTALGGVTTMVGEPQNLIIADQASWLFGEFLIRMAPVTLPVFVCGLLTCFAVEKLKVFGYGAELPDNVRHILVEFDKEERKARTNQDVAKLWIQGLIAVWLIVGLALHLAAVGLIGLSVIILATAFTGVIEEHSLGKAFEEALPFTALLAVFFSIVAVIIDQELFKPVIDAVLAVEDKGTQLAMFYVANGLLSMVSDNVFVGTVYINEVKTALVEGIITRDQFDLLAVAINTGTNLPSVATPNGQAAFLFLLTSALAPLIRLSYGKMVIMALPYTIVLALVGLFGIVFLLEPMTAWFYDAGWIAHHVGEATHAVSGGH.

Helical transmembrane passes span 13-33 (FLGKAPDWYKVAIISFLIINP), 34-54 (IVFFFVDPFVAGWLLVVEFIF), 90-110 (LVANIEVLLLLVFMVAGIYFM), 113-133 (LLLFIFTKILLGIRSKAILSL), 136-156 (CFAAAFLSAFLDALTVIAVVI), 205-225 (LLMHAGVGTALGGVTTMVGEP), 241-261 (FLIRMAPVTLPVFVCGLLTCF), 306-326 (GLIAVWLIVGLALHLAAVGLI), 327-347 (GLSVIILATAFTGVIEEHSLG), 351-371 (EEALPFTALLAVFFSIVAVII), 451-471 (ATPNGQAAFLFLLTSALAPLI), and 479-499 (VIMALPYTIVLALVGLFGIVF).

This sequence belongs to the NhaB Na(+)/H(+) (TC 2.A.34) antiporter family.

Its subcellular location is the cell inner membrane. The catalysed reaction is 2 Na(+)(in) + 3 H(+)(out) = 2 Na(+)(out) + 3 H(+)(in). Its function is as follows. Na(+)/H(+) antiporter that extrudes sodium in exchange for external protons. In Vibrio vulnificus (strain CMCP6), this protein is Na(+)/H(+) antiporter NhaB.